Here is a 183-residue protein sequence, read N- to C-terminus: SAGA-associated factor 11 homolog (183 aa).

The SGF11-type zinc-finger motif lies at 98–119; the sequence is CSCPNCNRIVAASRFAPHLEKC. The disordered stretch occupies residues 140-167; that stretch reads GGNYFGADEDDEDDADWSGEKRKKKIAP. Acidic residues predominate over residues 146–156; it reads ADEDDEDDADW.

This sequence belongs to the SGF11 family. Component of some SAGA transcription coactivator-HAT complexes. Within the SAGA complex, participates in a subcomplex of SAGA called the DUB module (deubiquitination module).

The protein resides in the nucleus. Functionally, component of the transcription regulatory histone acetylation (HAT) complex SAGA, a multiprotein complex that activates transcription by remodeling chromatin and mediating histone acetylation and deubiquitination. Within the SAGA complex, participates in a subcomplex that specifically deubiquitinates histone H2B. The SAGA complex is recruited to specific gene promoters by activators, where it is required for transcription. This Culex quinquefasciatus (Southern house mosquito) protein is SAGA-associated factor 11 homolog.